The chain runs to 283 residues: MESPRDILKRHGLRAKYSWGQNFLGDEDALEAIADALNLRADEPVVELGPGLGHLTRFLAATGARVTAVERDRDMVMVLEKEAIPGVRVVSGNAATVDFAQVAGAPDVAVAGNLPYHLTSPILFRVLEQRAHVSRAVFTLQKEVVERLAAEPGNRDYGLLTVLLGMHYDAENVLTLEAWRFHPPPKVDSAVLRLTRRKSPRAPIIDEARFTRVVKASFAHRRKTLINSIKSDPTLGTTETLIAALEAAGVDPQRRAETLTPEEFAAIERALGPLTPATSTPAE.

S-adenosyl-L-methionine contacts are provided by Asn22, Leu24, Gly49, Glu70, and Asn113.

The protein belongs to the class I-like SAM-binding methyltransferase superfamily. rRNA adenine N(6)-methyltransferase family. RsmA subfamily.

Its subcellular location is the cytoplasm. It catalyses the reaction adenosine(1518)/adenosine(1519) in 16S rRNA + 4 S-adenosyl-L-methionine = N(6)-dimethyladenosine(1518)/N(6)-dimethyladenosine(1519) in 16S rRNA + 4 S-adenosyl-L-homocysteine + 4 H(+). In terms of biological role, specifically dimethylates two adjacent adenosines (A1518 and A1519) in the loop of a conserved hairpin near the 3'-end of 16S rRNA in the 30S particle. May play a critical role in biogenesis of 30S subunits. This chain is Ribosomal RNA small subunit methyltransferase A, found in Myxococcus xanthus (strain DK1622).